A 126-amino-acid chain; its full sequence is Protein ApaG (126 aa).

The region spanning 2–126 (SDPRYQIDVS…FRLAVPGALH (125 aa)) is the ApaG domain.

This chain is Protein ApaG, found in Pseudomonas putida (strain ATCC 700007 / DSM 6899 / JCM 31910 / BCRC 17059 / LMG 24140 / F1).